Reading from the N-terminus, the 299-residue chain is Bifunctional protein FolD 1 (299 aa).

NADP(+) is bound by residues 168–170, S193, and I234; that span reads GRS.

The protein belongs to the tetrahydrofolate dehydrogenase/cyclohydrolase family. In terms of assembly, homodimer.

It carries out the reaction (6R)-5,10-methylene-5,6,7,8-tetrahydrofolate + NADP(+) = (6R)-5,10-methenyltetrahydrofolate + NADPH. The catalysed reaction is (6R)-5,10-methenyltetrahydrofolate + H2O = (6R)-10-formyltetrahydrofolate + H(+). It participates in one-carbon metabolism; tetrahydrofolate interconversion. Its function is as follows. Catalyzes the oxidation of 5,10-methylenetetrahydrofolate to 5,10-methenyltetrahydrofolate and then the hydrolysis of 5,10-methenyltetrahydrofolate to 10-formyltetrahydrofolate. The chain is Bifunctional protein FolD 1 from Rhizobium etli (strain ATCC 51251 / DSM 11541 / JCM 21823 / NBRC 15573 / CFN 42).